Here is a 122-residue protein sequence, read N- to C-terminus: Biogenesis of lysosome-related organelles complex 1 subunit BLS1 (122 aa).

Residue S33 is modified to Phosphoserine.

It belongs to the BLOC1S1 family. Component of the biogenesis of lysosome-related organelles complex-1 (BLOC-1) composed of at least BLI1, BLS1, CNL1, KXD1, SNN1 and VAB2.

Its subcellular location is the endosome. Component of the biogenesis of lysosome-related organelles complex-1 (BLOC-1), a complex involved in endosomal cargo sorting. The protein is Biogenesis of lysosome-related organelles complex 1 subunit BLS1 (BLS1) of Saccharomyces cerevisiae (strain RM11-1a) (Baker's yeast).